The sequence spans 198 residues: uncharacterized protein (198 aa).

Positions Gly40 to Pro111 are disordered. A compositionally biased stretch (low complexity) spans Ser60–Arg74.

This is an uncharacterized protein from Homo sapiens (Human).